Reading from the N-terminus, the 193-residue chain is CASP-like protein 2D1 (193 aa).

Residues 1 to 24 (MRANNNNTREEERSSSSKQQQPQA) form a disordered region. Residues 1 to 29 (MRANNNNTREEERSSSSKQQQPQAHMSLK) lie on the Cytoplasmic side of the membrane. Residues 30-50 (IIDSCLRLSVVPLSVATIWLT) form a helical membrane-spanning segment. Over 51–73 (VTNHESNPDYGNLDYNSIMGLKY) the chain is Extracellular. A helical membrane pass occupies residues 74 to 94 (MVGVSAISAIYALLSTISLWV). At 95-109 (TCLVSKAWLFFVPDQ) the chain is on the cytoplasmic side. Residues 110-132 (VLAYVMTTSVAGATEIVYLLNKG) form a helical membrane-spanning segment. Topologically, residues 133–151 (DKIVTWSEMCSSYPHYCSK) are extracellular. The helical transmembrane segment at 152–172 (LTIALGLHVFVLFFFLFLSVI) threads the bilayer. Residues 173 to 193 (SAYRAFSPFDPPCDSQTNIDA) lie on the Cytoplasmic side of the membrane.

This sequence belongs to the Casparian strip membrane proteins (CASP) family. Homodimer and heterodimers.

Its subcellular location is the cell membrane. In Arabidopsis lyrata subsp. lyrata (Lyre-leaved rock-cress), this protein is CASP-like protein 2D1.